The following is a 469-amino-acid chain: MNSILKEIINDKLMWVKYHKKKQPLFTFQNKIVRSNYNFKNSLKSIHPSYILEIKKASPSLGIINNKLDLKKISLIYKKYASSISILTDEKYFHGNFEFIPIVRKIAHRQPILCKDFFIDPYQIYLARYYQADAILLMLSILNDNQYVFLRNIAEMLNMDVLTEIENKKELTRAINLKSKIIGINNRNLNNLSIDIQKTKVLAPLIPKKIIIISESGIQNYNQIRQLKPFVQGFLIGSNLMRKKNLEEAVCKMILGNNKICGLTQSSDVKIIKEYGIVYGGLIFCKFSPRYINCNNAYSIINNVSLKYIGVFCNENLKRVAYIGTKLSLHAVQLHGNEDQIYINNLKLILPKHIKIWKSIIYLDFLKNQKHLFYNVNKYIIDNKDGGSGKTFNWKYLKNCKLDNVILAGGLDINNCILATDLGCYGYDFNSKLESSPGIKDLKKIVALTYSLRRHTVFNYRNLICLGKK.

Residues 1–257 are indole-3-glycerol phosphate synthase; it reads MNSILKEIIN…EAVCKMILGN (257 aa). The segment at 258 to 469 is N-(5'-phosphoribosyl)anthranilate isomerase; sequence NKICGLTQSS…YRNLICLGKK (212 aa).

It in the N-terminal section; belongs to the TrpC family. In the C-terminal section; belongs to the TrpF family. As to quaternary structure, monomer.

It catalyses the reaction N-(5-phospho-beta-D-ribosyl)anthranilate = 1-(2-carboxyphenylamino)-1-deoxy-D-ribulose 5-phosphate. The catalysed reaction is 1-(2-carboxyphenylamino)-1-deoxy-D-ribulose 5-phosphate + H(+) = (1S,2R)-1-C-(indol-3-yl)glycerol 3-phosphate + CO2 + H2O. It participates in amino-acid biosynthesis; L-tryptophan biosynthesis; L-tryptophan from chorismate: step 3/5. Its pathway is amino-acid biosynthesis; L-tryptophan biosynthesis; L-tryptophan from chorismate: step 4/5. Bifunctional enzyme that catalyzes two sequential steps of tryptophan biosynthetic pathway. The first reaction is catalyzed by the isomerase, coded by the TrpF domain; the second reaction is catalyzed by the synthase, coded by the TrpC domain. The sequence is that of Tryptophan biosynthesis protein TrpCF (trpC) from Buchnera aphidicola subsp. Baizongia pistaciae (strain Bp).